A 141-amino-acid chain; its full sequence is Holo-[acyl-carrier-protein] synthase (141 aa).

Residues Asp-8 and Glu-61 each contribute to the Mg(2+) site.

Belongs to the P-Pant transferase superfamily. AcpS family. Mg(2+) serves as cofactor.

It localises to the cytoplasm. It carries out the reaction apo-[ACP] + CoA = holo-[ACP] + adenosine 3',5'-bisphosphate + H(+). Functionally, transfers the 4'-phosphopantetheine moiety from coenzyme A to a Ser of acyl-carrier-protein. The protein is Holo-[acyl-carrier-protein] synthase of Rhodopseudomonas palustris (strain HaA2).